Consider the following 99-residue polypeptide: Putative septation protein SpoVG (99 aa).

This sequence belongs to the SpoVG family.

Could be involved in septation. In Exiguobacterium sp. (strain ATCC BAA-1283 / AT1b), this protein is Putative septation protein SpoVG.